Consider the following 312-residue polypeptide: Ribonuclease H2 subunit B (312 aa).

An N-acetylalanine modification is found at A2. The interval 236-256 (EPSASLPNPPSKKIKLSDEPV) is disordered. An N6-acetyllysine modification is found at K295. The residue at position 296 (S296) is a Phosphoserine.

It belongs to the RNase H2 subunit B family. The RNase H2 complex is a heterotrimer composed of the catalytic subunit RNASEH2A and the non-catalytic subunits RNASEH2B and RNASEH2C. Widely expressed.

Its subcellular location is the nucleus. Its function is as follows. Non catalytic subunit of RNase H2, an endonuclease that specifically degrades the RNA of RNA:DNA hybrids. Participates in DNA replication, possibly by mediating the removal of lagging-strand Okazaki fragment RNA primers during DNA replication. Mediates the excision of single ribonucleotides from DNA:RNA duplexes. This is Ribonuclease H2 subunit B (RNASEH2B) from Homo sapiens (Human).